An 85-amino-acid polypeptide reads, in one-letter code: Sec-independent protein translocase protein TatA (85 aa).

Residues 7–27 (VFGSLGWTEILLILFIALLLF) traverse the membrane as a helical segment. Residues 50-85 (LTGESDDSSQQISQEQERSVPKEETKTSKSKKSKSA) are disordered. The span at 64 to 76 (EQERSVPKEETKT) shows a compositional bias: basic and acidic residues.

This sequence belongs to the TatA/E family. Forms a complex with TatC.

Its subcellular location is the cell inner membrane. Functionally, part of the twin-arginine translocation (Tat) system that transports large folded proteins containing a characteristic twin-arginine motif in their signal peptide across membranes. TatA could form the protein-conducting channel of the Tat system. The chain is Sec-independent protein translocase protein TatA from Leptospira interrogans serogroup Icterohaemorrhagiae serovar Lai (strain 56601).